Reading from the N-terminus, the 149-residue chain is Macrodomain Ter protein (149 aa).

Belongs to the MatP family. In terms of assembly, homodimer.

It is found in the cytoplasm. Its function is as follows. Required for spatial organization of the terminus region of the chromosome (Ter macrodomain) during the cell cycle. Prevents early segregation of duplicated Ter macrodomains during cell division. Binds specifically to matS, which is a 13 bp signature motif repeated within the Ter macrodomain. The sequence is that of Macrodomain Ter protein from Vibrio vulnificus (strain CMCP6).